Here is a 494-residue protein sequence, read N- to C-terminus: V-type proton ATPase subunit B (494 aa).

Position 384 (Arg-384) interacts with ATP.

The protein belongs to the ATPase alpha/beta chains family. In terms of assembly, V-ATPase is a heteromultimeric enzyme made up of two complexes: the ATP-hydrolytic V1 complex and the proton translocation V0 complex. The V1 complex consists of three catalytic AB heterodimers that form a heterohexamer, three peripheral stalks each consisting of EG heterodimers, one central rotor including subunits D and F, and the regulatory subunits C and H. The proton translocation complex V0 consists of the proton transport subunit a, a ring of proteolipid subunits c9c'', rotary subunit d, subunits e and f, and the accessory subunits VhaAC45 and ATP6AP2.

In terms of biological role, non-catalytic subunit of the V1 complex of vacuolar(H+)-ATPase (V-ATPase), a multisubunit enzyme composed of a peripheral complex (V1) that hydrolyzes ATP and a membrane integral complex (V0) that translocates protons. V-ATPase is responsible for acidifying and maintaining the pH of intracellular compartments and in some cell types, is targeted to the plasma membrane, where it is responsible for acidifying the extracellular environment. Essential for the proper assembly and activity of V-ATPase. The sequence is that of V-type proton ATPase subunit B (VHA55) from Heliothis virescens (Tobacco budworm moth).